The primary structure comprises 71 residues: Large ribosomal subunit protein uL29 (71 aa).

This sequence belongs to the universal ribosomal protein uL29 family.

This chain is Large ribosomal subunit protein uL29, found in Methanocella arvoryzae (strain DSM 22066 / NBRC 105507 / MRE50).